The following is a 155-amino-acid chain: MSRRGTAEEKTAKSDPIYRNRLVNMLVNRILKHGKKSLAYQIIYRAVKKIQQKTETNPLSVLRQAIRGVTPNIAVKARRVGGSTHQVPIEIGSTQGKALAIRWLLGASRKRPGRNMAFKLSSELVDAARGSGDAIRKKEETHRMAEANRAFAHFR.

It belongs to the universal ribosomal protein uS7 family. In terms of assembly, part of the 30S ribosomal subunit.

It is found in the plastid. The protein localises to the chloroplast. One of the primary rRNA binding proteins, it binds directly to 16S rRNA where it nucleates assembly of the head domain of the 30S subunit. This chain is Small ribosomal subunit protein uS7cz/uS7cy (rps7-A), found in Nymphaea alba (White water-lily).